The following is a 616-amino-acid chain: MALKSSSADGKTRSSVQIFIVFSLCCFFYILGAWQRSGFGKGDSIALEMTNSGADCNIVPSLNFETHHAGESSLVGASEAAKVKAFEPCDGRYTDYTPCQDQRRAMTFPRDSMIYRERHCAPENEKLHCLIPAPKGYVTPFSWPKSRDYVPYANAPYKALTVEKAIQNWIQYEGDVFRFPGGGTQFPQGADKYIDQLASVIPMENGTVRTALDTGCGVASWGAYLWSRNVRAMSFAPRDSHEAQVQFALERGVPAVIGVLGTIKLPYPTRAFDMAHCSRCLIPWGANDGMYLMEVDRVLRPGGYWILSGPPINWKVNYKAWQRPKEDLQEEQRKIEEAAKLLCWEKKYEHGEIAIWQKRVNDEACRSRQDDPRANFCKTDDTDDVWYKKMEACITPYPETSSSDEVAGGELQAFPDRLNAVPPRISSGSISGVTVDAYEDDNRQWKKHVKAYKRINSLLDTGRYRNIMDMNAGFGGFAAALESQKLWVMNVVPTIAEKNRLGVVYERGLIGIYHDWCEAFSTYPRTYDLIHANHLFSLYKNKCNADDILLEMDRILRPEGAVIIRDDVDTLIKVKRIIAGMRWDAKLVDHEDGPLVPEKVLIAVKQYWVTNSTSTH.

Residues M1 to R13 lie on the Cytoplasmic side of the membrane. Residues S14–W34 traverse the membrane as a helical; Signal-anchor for type II membrane protein segment. Over Q35–H616 the chain is Lumenal. 2 N-linked (GlcNAc...) asparagine glycosylation sites follow: N205 and N611.

This sequence belongs to the methyltransferase superfamily.

Its subcellular location is the golgi apparatus membrane. This is Probable methyltransferase PMT2 from Arabidopsis thaliana (Mouse-ear cress).